Reading from the N-terminus, the 149-residue chain is MSELLKLHHLRPAPGSNKAKIRKGRGEASKGKTAGRGTKGTKARSTVPAGFEGGQMPLIRRIPKLKGFSNAKFKTVYQVVNLDKLSKLYPEGGEVTIEDLVAKGAVRKNQPVKVLGTGEISVPVRVSANAFSSSAKEKILAAGGSVTEI.

Positions 1 to 52 (MSELLKLHHLRPAPGSNKAKIRKGRGEASKGKTAGRGTKGTKARSTVPAGFE) are disordered.

This sequence belongs to the universal ribosomal protein uL15 family. In terms of assembly, part of the 50S ribosomal subunit.

Its function is as follows. Binds to the 23S rRNA. This is Large ribosomal subunit protein uL15 from Thermobifida fusca (strain YX).